The following is a 415-amino-acid chain: Ubp4-interactor sfp47 (415 aa).

Phosphoserine occurs at positions 221 and 226. T231 carries the phosphothreonine modification. Position 235 is a phosphoserine (S235). Residues 352-415 (PIFAYVRALY…PSNYIEELEY (64 aa)) enclose the SH3 domain.

As to quaternary structure, interacts with ubp4.

It is found in the cytoplasm. Its subcellular location is the endosome. Its function is as follows. Required for the regulation of activity and recruitment of ubp4 to endosomes. The protein is Ubp4-interactor sfp47 (sfp47) of Schizosaccharomyces pombe (strain 972 / ATCC 24843) (Fission yeast).